A 676-amino-acid polypeptide reads, in one-letter code: UvrABC system protein C (676 aa).

Residues 16-95 enclose the GIY-YIG domain; sequence VEPGVYRFRD…IKEFDPRFNI (80 aa). The UVR domain occupies 208-243; the sequence is DRLVRDLERKMTAAAEDLDFERAARLRDDIGALRRA.

This sequence belongs to the UvrC family. In terms of assembly, interacts with UvrB in an incision complex.

The protein resides in the cytoplasm. In terms of biological role, the UvrABC repair system catalyzes the recognition and processing of DNA lesions. UvrC both incises the 5' and 3' sides of the lesion. The N-terminal half is responsible for the 3' incision and the C-terminal half is responsible for the 5' incision. The polypeptide is UvrABC system protein C (Mycobacterium sp. (strain JLS)).